The primary structure comprises 223 residues: MHAGSGNDMDITRMTPTRLDDEPDAPEPETREDDNKTLNSPISELEGRLFDQRKVLIFGGINDKIARDVTGRLLALAGTSDKPIDVYVNSPGGHVESGDTIHDMIRFVDSIAPINMIGTGWVASAGALIYAAGRPERRVCLPNTRFLLHQPMGGVRGPATDIDIEAREIIKMRERLNRIFAKETGQTYEKVAKDTDRNYWMSANEAIAYGLVNRIIHSATELK.

Positions 1–40 (MHAGSGNDMDITRMTPTRLDDEPDAPEPETREDDNKTLNS) are disordered. Over residues 21–32 (DEPDAPEPETRE) the composition is skewed to acidic residues. The Nucleophile role is filled by S124. Residue H149 is part of the active site.

Belongs to the peptidase S14 family. As to quaternary structure, fourteen ClpP subunits assemble into 2 heptameric rings which stack back to back to give a disk-like structure with a central cavity, resembling the structure of eukaryotic proteasomes.

It localises to the cytoplasm. It catalyses the reaction Hydrolysis of proteins to small peptides in the presence of ATP and magnesium. alpha-casein is the usual test substrate. In the absence of ATP, only oligopeptides shorter than five residues are hydrolyzed (such as succinyl-Leu-Tyr-|-NHMec, and Leu-Tyr-Leu-|-Tyr-Trp, in which cleavage of the -Tyr-|-Leu- and -Tyr-|-Trp bonds also occurs).. Its function is as follows. Cleaves peptides in various proteins in a process that requires ATP hydrolysis. Has a chymotrypsin-like activity. Plays a major role in the degradation of misfolded proteins. The polypeptide is ATP-dependent Clp protease proteolytic subunit 2 (Gluconobacter oxydans (strain 621H) (Gluconobacter suboxydans)).